The primary structure comprises 586 residues: Aspartate--tRNA(Asp/Asn) ligase (586 aa).

Glu-172 serves as a coordination point for L-aspartate. Residues Gln-196 to Lys-199 are aspartate. Arg-218 contacts L-aspartate. ATP contacts are provided by residues Arg-218–Glu-220 and Gln-227. His-446 lines the L-aspartate pocket. ATP is bound at residue Glu-480. Arg-487 contacts L-aspartate. Residue Gly-532–Arg-535 coordinates ATP.

The protein belongs to the class-II aminoacyl-tRNA synthetase family. Type 1 subfamily. Homodimer.

It localises to the cytoplasm. The enzyme catalyses tRNA(Asx) + L-aspartate + ATP = L-aspartyl-tRNA(Asx) + AMP + diphosphate. Aspartyl-tRNA synthetase with relaxed tRNA specificity since it is able to aspartylate not only its cognate tRNA(Asp) but also tRNA(Asn). Reaction proceeds in two steps: L-aspartate is first activated by ATP to form Asp-AMP and then transferred to the acceptor end of tRNA(Asp/Asn). This chain is Aspartate--tRNA(Asp/Asn) ligase, found in Borrelia garinii subsp. bavariensis (strain ATCC BAA-2496 / DSM 23469 / PBi) (Borreliella bavariensis).